We begin with the raw amino-acid sequence, 355 residues long: Ataxin-3-like protein (355 aa).

The region spanning 1 to 180 is the Josephin domain; sequence MDFIFHEKQE…DCEADQLLQI (180 aa). The active-site Nucleophile is Cys14. His119 functions as the Proton acceptor in the catalytic mechanism. Asn134 is an active-site residue. 2 disordered regions span residues 209-230 and 253-331; these read LEKV…EDFQ and LSMQ…DISE. Residues 215–228 are compositionally biased toward acidic residues; that stretch reads ESDESGTSDQDEED. UIM domains are found at residues 224–243 and 244–258; these read QDEE…TNRE and DEHL…MQGS. The span at 253 to 276 shows a compositional bias: polar residues; the sequence is LSMQGSSGNTSQDLPKTSCVTPAS. Basic and acidic residues predominate over residues 278–293; sequence QPKKIKEDYFEKHQQE.

Widely expressed.

It localises to the nucleus. The catalysed reaction is Thiol-dependent hydrolysis of ester, thioester, amide, peptide and isopeptide bonds formed by the C-terminal Gly of ubiquitin (a 76-residue protein attached to proteins as an intracellular targeting signal).. In terms of biological role, deubiquitinating enzyme that cleaves both 'Lys-48'-linked and 'Lys-63'-linked poly-ubiquitin chains (in vitro). Acts as a deubiquitinating enzyme for the transcription factor KLF5, playing a role in the regulation of KLF5 stability. The chain is Ataxin-3-like protein from Homo sapiens (Human).